We begin with the raw amino-acid sequence, 443 residues long: Putative type II methyltransferase M.BsuMIIP (443 aa).

The SAM-dependent MTase C5-type domain occupies 4 to 440; the sequence is LRVMSLFSGI…QELIHTYVNK (437 aa). Cys78 is a catalytic residue.

The protein belongs to the class I-like SAM-binding methyltransferase superfamily. C5-methyltransferase family.

The catalysed reaction is a 2'-deoxycytidine in DNA + S-adenosyl-L-methionine = a 5-methyl-2'-deoxycytidine in DNA + S-adenosyl-L-homocysteine + H(+). A putative methylase, recognizes the double-stranded sequence 5'-GGCC-3', methylates C-?. There is no known cognate restriction enzyme. This Bacillus subtilis (strain 168) protein is Putative type II methyltransferase M.BsuMIIP (mtbP).